A 413-amino-acid chain; its full sequence is Multifunctional CCA protein (413 aa).

Residues Gly-8 and Arg-11 each coordinate ATP. Positions 8 and 11 each coordinate CTP. Residues Asp-21 and Asp-23 each coordinate Mg(2+). ATP-binding residues include Arg-91, Arg-143, and Arg-146. CTP contacts are provided by Arg-91, Arg-143, and Arg-146. An HD domain is found at 232–333 (TGVHVMMVVD…VRLFERSDAL (102 aa)).

Belongs to the tRNA nucleotidyltransferase/poly(A) polymerase family. Bacterial CCA-adding enzyme type 1 subfamily. Monomer. Can also form homodimers and oligomers. Requires Mg(2+) as cofactor. Ni(2+) is required as a cofactor.

The enzyme catalyses a tRNA precursor + 2 CTP + ATP = a tRNA with a 3' CCA end + 3 diphosphate. It carries out the reaction a tRNA with a 3' CCA end + 2 CTP + ATP = a tRNA with a 3' CCACCA end + 3 diphosphate. In terms of biological role, catalyzes the addition and repair of the essential 3'-terminal CCA sequence in tRNAs without using a nucleic acid template. Adds these three nucleotides in the order of C, C, and A to the tRNA nucleotide-73, using CTP and ATP as substrates and producing inorganic pyrophosphate. tRNA 3'-terminal CCA addition is required both for tRNA processing and repair. Also involved in tRNA surveillance by mediating tandem CCA addition to generate a CCACCA at the 3' terminus of unstable tRNAs. While stable tRNAs receive only 3'-terminal CCA, unstable tRNAs are marked with CCACCA and rapidly degraded. In Burkholderia cenocepacia (strain HI2424), this protein is Multifunctional CCA protein.